The primary structure comprises 426 residues: 3-phosphoshikimate 1-carboxyvinyltransferase (426 aa).

Lys21, Ser22, and Arg26 together coordinate 3-phosphoshikimate. Phosphoenolpyruvate is bound at residue Lys21. Positions 93 and 121 each coordinate phosphoenolpyruvate. Ser165, Gln167, Asp313, and Lys340 together coordinate 3-phosphoshikimate. Gln167 contributes to the phosphoenolpyruvate binding site. The active-site Proton acceptor is the Asp313. Residues Arg344 and Arg386 each coordinate phosphoenolpyruvate.

It belongs to the EPSP synthase family. In terms of assembly, monomer.

It is found in the cytoplasm. The enzyme catalyses 3-phosphoshikimate + phosphoenolpyruvate = 5-O-(1-carboxyvinyl)-3-phosphoshikimate + phosphate. Its pathway is metabolic intermediate biosynthesis; chorismate biosynthesis; chorismate from D-erythrose 4-phosphate and phosphoenolpyruvate: step 6/7. In terms of biological role, catalyzes the transfer of the enolpyruvyl moiety of phosphoenolpyruvate (PEP) to the 5-hydroxyl of shikimate-3-phosphate (S3P) to produce enolpyruvyl shikimate-3-phosphate and inorganic phosphate. This chain is 3-phosphoshikimate 1-carboxyvinyltransferase, found in Solibacter usitatus (strain Ellin6076).